We begin with the raw amino-acid sequence, 119 residues long: Ribonuclease P protein component (119 aa).

It belongs to the RnpA family. In terms of assembly, consists of a catalytic RNA component (M1 or rnpB) and a protein subunit.

The catalysed reaction is Endonucleolytic cleavage of RNA, removing 5'-extranucleotides from tRNA precursor.. RNaseP catalyzes the removal of the 5'-leader sequence from pre-tRNA to produce the mature 5'-terminus. It can also cleave other RNA substrates such as 4.5S RNA. The protein component plays an auxiliary but essential role in vivo by binding to the 5'-leader sequence and broadening the substrate specificity of the ribozyme. This is Ribonuclease P protein component from Borreliella burgdorferi (strain ATCC 35210 / DSM 4680 / CIP 102532 / B31) (Borrelia burgdorferi).